Consider the following 205-residue polypeptide: Coatomer subunit zeta-2 (205 aa).

The segment covering 1 to 12 has biased composition (basic and acidic residues); the sequence is MQRPEAWPRPHP. Residues 1 to 33 are disordered; the sequence is MQRPEAWPRPHPGEGASAAQAGGAAPPTRATEQ. Over residues 13–30 the composition is skewed to low complexity; sequence GEGASAAQAGGAAPPTRA.

This sequence belongs to the adaptor complexes small subunit family. As to quaternary structure, oligomeric complex.

The protein localises to the cytoplasm. Its subcellular location is the cytosol. The protein resides in the endoplasmic reticulum-Golgi intermediate compartment membrane. It is found in the golgi apparatus membrane. It localises to the cytoplasmic vesicle. The protein localises to the COPI-coated vesicle membrane. The coatomer is a cytosolic protein complex that binds to dilysine motifs and reversibly associates with Golgi non-clathrin-coated vesicles, which further mediate biosynthetic protein transport from the ER, via the Golgi up to the trans Golgi network. Coatomer complex is required for budding from Golgi membranes, and is essential for the retrograde Golgi-to-ER transport of dilysine-tagged proteins. The zeta subunit may be involved in regulating the coat assembly and, hence, the rate of biosynthetic protein transport due to its association-dissociation properties with the coatomer complex. In Mus musculus (Mouse), this protein is Coatomer subunit zeta-2 (Copz2).